Consider the following 242-residue polypeptide: Protein ABHD14A (242 aa).

A helical; Signal-anchor for type II membrane protein transmembrane segment spans residues 6 to 26 (AALLGLGLLLMFLLYMGLPGP). N-linked (GlcNAc...) asparagine glycosylation occurs at Asn38. Catalysis depends on charge relay system residues Ser142, Asp193, and His220.

Belongs to the AB hydrolase superfamily. ABHD14 family.

It localises to the cytoplasm. Its subcellular location is the membrane. Functionally, possible role in granule neuron development. This is Protein ABHD14A from Rattus norvegicus (Rat).